Consider the following 345-residue polypeptide: Nuclear distribution protein nudE-like 1 (345 aa).

Positions 28–190 form a coiled coil; sequence QSFQEARDEL…LAVRERQQEV (163 aa). The tract at residues 56–166 is self-association; it reads VQAEQRNRDL…LDEKESLLVS (111 aa). The interval 64-189 is interaction with KATNB1; it reads DLQADNQRLK…ELAVRERQQE (126 aa). The required for interaction with PAFAH1B1 stretch occupies residues 114–133; that stretch reads YVRELEQANDDLERAKRATI. Residues 175-345 are interaction with CENPF; the sequence is RDLRQELAVR…SAPGMLPLSV (171 aa). The interaction with YWHAE stretch occupies residues 189 to 256; the sequence is EVTRKSAPSS…SARISALNIV (68 aa). An interaction with NEFL region spans residues 191–345; that stretch reads TRKSAPSSPT…SAPGMLPLSV (155 aa). The segment at 195-256 is interaction with KATNA1; that stretch reads APSSPTLDCE…SARISALNIV (62 aa). Serine 215 is subject to Phosphoserine. The tract at residues 217 to 240 is disordered; it reads PATPVGKGTENSFPSPKAIPNGFG. Residue threonine 219 is modified to Phosphothreonine. Residue serine 231 is modified to Phosphoserine. The tract at residues 241–280 is interaction with DISC1; the sequence is TSPLTPSARISALNIVGDLLRKVGALESKLAACRNFAKDQ. Residue serine 242 is modified to Phosphoserine; by CDK1. Threonine 245 carries the phosphothreonine; by CDK1 and MAPK1 modification. The tract at residues 256–291 is required for localization to the centrosome and interaction with dynein, dynactin, tubulin gamma, PCM1 and PCNT; the sequence is VGDLLRKVGALESKLAACRNFAKDQASRKSYVPGSV. Cysteine 273 is lipidated: S-palmitoyl cysteine; by ZDHHC2, ZDHHC3 and ZDHHC7. Residues 314-345 are disordered; that stretch reads KGAVNGFDPAPPPPGLGSSRPSSAPGMLPLSV. The segment covering 329-339 has biased composition (low complexity); that stretch reads LGSSRPSSAPG. A Phosphoserine modification is found at serine 344.

The protein belongs to the nudE family. Interacts with PLEKHM1 (via N- and C-terminus). Interacts with dynactin, PCM1 and PCNT. Interacts (via C-terminus) with CENPF. Self-associates. Interacts with DISC1, dynein, tubulin gamma, KATNA1, KATNB1, microtubules, PAFAHB1 and YWHAE. Interacts directly with NEFL and indirectly with NEFH. Interacts with ZNF365. Interacts with GTP-bound RAB9A; the interaction may lead to RAB9A-dynein motor tethering. Phosphorylated by CDK1 and MAPK1. Phosphorylated in mitosis. Phosphorylated by CDK5. Phosphorylation by CDK5 promotes interaction with KATNA1 and YWHAE. In terms of processing, palmitoylation at Cys-273 reduces affinity for dynein. Expressed in brain, liver, lung and testis (at protein level). Expressed in brain, epididymis, eye, heart, kidney, large intestine, liver, ovary, pancreas, prostate, skeletal muscle, smooth muscle, spleen, submaxillary gland, testis, thymus and thyroid. Within the brain expression is pronounced in the cortex, hippocampus, olfactory bulb, striatum, thalamic and hypothalamic structures and in the molecular layer of the cerebellum. Largely excluded from cortical progenitor cells which express NDE1.

Its subcellular location is the cytoplasm. The protein localises to the cytoskeleton. The protein resides in the microtubule organizing center. It localises to the centrosome. It is found in the chromosome. Its subcellular location is the centromere. The protein localises to the kinetochore. The protein resides in the spindle. In terms of biological role, required for organization of the cellular microtubule array and microtubule anchoring at the centrosome. May regulate microtubule organization at least in part by targeting the microtubule severing protein KATNA1 to the centrosome. Also positively regulates the activity of the minus-end directed microtubule motor protein dynein. May enhance dynein-mediated microtubule sliding by targeting dynein to the microtubule plus ends. Required for several dynein- and microtubule-dependent processes such as the maintenance of Golgi integrity, the centripetal motion of secretory vesicles and the coupling of the nucleus and centrosome. Also required during brain development for the migration of newly formed neurons from the ventricular/subventricular zone toward the cortical plate. Plays a role, together with DISC1, in the regulation of neurite outgrowth. Required for mitosis in some cell types but appears to be dispensible for mitosis in cortical neuronal progenitors, which instead requires NDE1. Facilitates the polymerization of neurofilaments from the individual subunits NEFH and NEFL. Positively regulates lysosome peripheral distribution and ruffled border formation in osteoclasts. Plays a role, together with DISC1, in the regulation of neurite outgrowth. May act as a RAB9A/B effector that tethers RAB9-associated late endosomes to the dynein motor for their retrograde transport to the trans-Golgi network. This is Nuclear distribution protein nudE-like 1 from Mus musculus (Mouse).